The primary structure comprises 355 residues: Zinc transporter ZIP13 homolog (355 aa).

N-linked (GlcNAc...) asparagine glycosylation occurs at Asn4. 3 consecutive transmembrane segments (helical) span residues 37–57 (VFSLLGSVVIGLSGIFPLIII), 79–99 (VLLSFAVGGLLGDVFLHLLPE), and 118–138 (LWVLSGILIFTIVEKIFSGYA). Residue Asn218 is glycosylated (N-linked (GlcNAc...) asparagine). 2 helical membrane-spanning segments follow: residues 273-293 (LLTAGAGLLGALVAIGGSGVT) and 301-321 (SWIMPFTAGGFLHIALVTVLP).

It belongs to the ZIP transporter (TC 2.A.5) family. KE4/Catsup subfamily.

It is found in the basolateral cell membrane. The protein resides in the golgi apparatus membrane. Its function is as follows. Involved in zinc transport and homeostasis. This is Zinc transporter ZIP13 homolog (Zip99C) from Drosophila melanogaster (Fruit fly).